Reading from the N-terminus, the 120-residue chain is PYEKIGAELVKEVAKKTDDVAGDGTTTATVLAQALVHEGLRNVAAGANPLSLKRGIEKAVEKVTETLLKGAKEVETKEQIAATAAISAGDQSIGDLIAEAMDKVGNEGVITVEESNTFGL.

Residue aspartate 23 to threonine 27 coordinates ATP.

It belongs to the chaperonin (HSP60) family. As to quaternary structure, forms a cylinder of 14 subunits composed of two heptameric rings stacked back-to-back. Interacts with the co-chaperonin GroES.

It localises to the cytoplasm. The enzyme catalyses ATP + H2O + a folded polypeptide = ADP + phosphate + an unfolded polypeptide.. Together with its co-chaperonin GroES, plays an essential role in assisting protein folding. The GroEL-GroES system forms a nano-cage that allows encapsulation of the non-native substrate proteins and provides a physical environment optimized to promote and accelerate protein folding. The sequence is that of Chaperonin GroEL from Mycobacterium shimoidei.